Consider the following 576-residue polypeptide: MENMKVLLGLICLMVPLLSLEIDVCTEYPNQIVLFLSVNEIDIRKCPLTPNKMHGDTIIWYKNDSKTPISADRDSRIHQQNEHLWFVPAKVEDSGYYYCIVRNSTYCLKTKVTVTVLENDPGLCYSTQATFPQRLHIAGDGSLVCPYVSYFKDENNELPEVQWYKNCKPLLLDNVSFFGVKDKLLVRNVAEEHRGDYICRMSYTFRGKQYPVTRVIQFITIDENKRDRPVILSPRNETIEADPGSMIQLICNVTGQFSDLVYWKWNGSEIEWNDPFLAEDYQFVEHPSTKRKYTLITTLNISEVKSQFYRYPFICVVKNTNIFESAHVQLIYPVPDFKNYLIGGFIILTATIVCCVCIYKVFKVDIVLWYRDSCSGFLPSKASDGKTYDAYILYPKTLGEGSFSDLDTFVFKLLPEVLEGQFGYKLFIYGRDDYVGEDTIEVTNENVKKSRRLIIILVRDMGGFSWLGQSSEEQIAIYNALIQEGIKIVLLELEKIQDYEKMPDSIQFIKQKHGVICWSGDFQERPQSAKTRFWKNLRYQMPAQRRSPLSKHRLLTLDPVRDTKEKLPAATHLPLG.

A signal peptide spans 1–19 (MENMKVLLGLICLMVPLLS). Residues 20-338 (LEIDVCTEYP…QLIYPVPDFK (319 aa)) are Extracellular-facing. 3 disulfides stabilise this stretch: Cys-25–Cys-107, Cys-46–Cys-99, and Cys-145–Cys-199. Ig-like C2-type domains follow at residues 25–115 (CTEY…VTVT), 121–213 (PGLC…YPVT), and 229–329 (PVIL…AHVQ). Asn-63, Asn-103, Asn-174, Asn-236, Asn-252, Asn-266, and Asn-300 each carry an N-linked (GlcNAc...) asparagine glycan. Cysteines 251 and 315 form a disulfide. The chain crosses the membrane as a helical span at residues 339-359 (NYLIGGFIILTATIVCCVCIY). Residues 360–576 (KVFKVDIVLW…LPAATHLPLG (217 aa)) lie on the Cytoplasmic side of the membrane. Residues 386–541 (KTYDAYILYP…RFWKNLRYQM (156 aa)) form the TIR domain. The active site involves Glu-473. Residue Tyr-499 is modified to Phosphotyrosine. Residue Thr-556 is modified to Phosphothreonine; by PKC.

The protein belongs to the interleukin-1 receptor family. As to quaternary structure, the interleukin-1 receptor complex is a heterodimer of IL1R1 and IL1RAP. Interacts with PIK3R1. Interacts with IL1A. Post-translationally, a soluble form (sIL1R1) is probably produced by proteolytic cleavage at the cell surface (shedding). In terms of processing, rapidly phosphorylated on Tyr-499 in response to IL-1, which creates a SH2 binding site for the PI 3-kinase regulatory subunit PIK3R1. As to expression, isoform 2 is expressed in various brain tissues.

The protein resides in the membrane. It is found in the cell membrane. Its subcellular location is the secreted. It carries out the reaction NAD(+) + H2O = ADP-D-ribose + nicotinamide + H(+). In terms of biological role, receptor for IL1A, IL1B and IL1RN. After binding to interleukin-1 associates with the coreceptor IL1RAP to form the high affinity interleukin-1 receptor complex which mediates interleukin-1-dependent activation of NF-kappa-B, MAPK and other pathways. Signaling involves the recruitment of adapter molecules such as TOLLIP, MYD88, and IRAK1 or IRAK2 via the respective TIR domains of the receptor/coreceptor subunits. Binds ligands with comparable affinity and binding of antagonist IL1RN prevents association with IL1RAP to form a signaling complex. Involved in IL1B-mediated costimulation of IFNG production from T-helper 1 (Th1) cells. Unable to mediate canonical IL-1 signaling. Cooperates with IL1RAP isoform 3 to mediate IL1B-induced neuronal activity including IL1B-potentiated NMDA-induced calcium influx mediated by Akt kinase activation. The polypeptide is Interleukin-1 receptor type 1 (Il1r1) (Mus musculus (Mouse)).